Here is an 87-residue protein sequence, read N- to C-terminus: U3-theraphotoxin-Hhn1a 13 (87 aa).

A signal peptide spans 1–24; that stretch reads MVNMKASMFLTSAGLVPLFVVCYA. Residues 25-52 constitute a propeptide that is removed on maturation; that stretch reads SESEEKEFPKEMLSSIFAVDNDFKQEER. Disulfide bonds link C54-C67, C61-C72, and C66-C79.

This sequence belongs to the neurotoxin 10 (Hwtx-1) family. 51 (Hntx-8) subfamily. Hntx-8 sub-subfamily. Expressed by the venom gland.

It is found in the secreted. Functionally, ion channel inhibitor. The chain is U3-theraphotoxin-Hhn1a 13 from Cyriopagopus hainanus (Chinese bird spider).